We begin with the raw amino-acid sequence, 347 residues long: NADH-ubiquinone oxidoreductase chain 2 (347 aa).

10 consecutive transmembrane segments (helical) span residues 3–23 (PIIY…VMIS), 25–45 (HWLL…PVLM), 59–79 (YFLT…INLL), 89–109 (MFNP…LGLS), 149–169 (INPN…GWGG), 178–198 (IMAY…PYNT), 200–220 (MTIL…MLLI), 237–257 (MPVI…LPPL), 274–294 (ESII…YFYM), and 325–345 (LLPT…ALSS).

Belongs to the complex I subunit 2 family. Core subunit of respiratory chain NADH dehydrogenase (Complex I) which is composed of 45 different subunits. Interacts with TMEM242.

The protein resides in the mitochondrion inner membrane. The catalysed reaction is a ubiquinone + NADH + 5 H(+)(in) = a ubiquinol + NAD(+) + 4 H(+)(out). In terms of biological role, core subunit of the mitochondrial membrane respiratory chain NADH dehydrogenase (Complex I) which catalyzes electron transfer from NADH through the respiratory chain, using ubiquinone as an electron acceptor. Essential for the catalytic activity and assembly of complex I. The protein is NADH-ubiquinone oxidoreductase chain 2 of Sus scrofa (Pig).